We begin with the raw amino-acid sequence, 338 residues long: Putative transport protein TM_1349 (338 aa).

Transmembrane regions (helical) follow at residues 20 to 40 (ILIS…IVLM), 68 to 88 (ALLL…PPVF), 147 to 167 (VSVT…VFYI), 203 to 223 (VIFI…EAFN), 239 to 259 (FIPI…SLTL), 263 to 283 (GVLL…VVFI), and 297 to 317 (IILS…FVGV).

The protein belongs to the autoinducer-2 exporter (AI-2E) (TC 2.A.86) family.

It localises to the cell membrane. The chain is Putative transport protein TM_1349 from Thermotoga maritima (strain ATCC 43589 / DSM 3109 / JCM 10099 / NBRC 100826 / MSB8).